A 396-amino-acid chain; its full sequence is MLPKLILLATLYISQFIPTTFFIQALPVFMRQQKMSLDVIGFLGLLILPSGLKFLWSPFIDRYRLGKLGHYRGWIICFQLLLISTMLVTAFIDIQDNLNAFLTCMFLASLFSSSQDIATDALAVNLLEPQERGLGNAIQSGGNIFGAIIGGGVMLILLDKIGWRYSLITLSIFMLINLVPILIYREKSQHQLENSTFFRSYFQPFISFLSRPKALPWLFVVLLYMMGDSVTSLMIRPLLVDRGLSLPDIGWILGIVSYSARIVSALIAGLVIVKLGRIKSLIIFGFIADLTTLLYIIPAIGVSSLLVLYTVCIIVNATQSMAYTALLSAMMDKCEKNTAATDYTMQVSVMFLGGIAATVLSGMLATTMGYSFIFIMSAAVSLLSVFLITQEYGVSS.

A signal peptide spans 1-25 (MLPKLILLATLYISQFIPTTFFIQA). The Cytoplasmic portion of the chain corresponds to 26-39 (LPVFMRQQKMSLDV). The chain crosses the membrane as a helical span at residues 40 to 60 (IGFLGLLILPSGLKFLWSPFI). Residues 61–73 (DRYRLGKLGHYRG) are Periplasmic-facing. The chain crosses the membrane as a helical span at residues 74–94 (WIICFQLLLISTMLVTAFIDI). Topologically, residues 95 to 104 (QDNLNAFLTC) are cytoplasmic. The chain crosses the membrane as a helical span at residues 105–127 (MFLASLFSSSQDIATDALAVNLL). Topologically, residues 128-137 (EPQERGLGNA) are periplasmic. A helical membrane pass occupies residues 138 to 158 (IQSGGNIFGAIIGGGVMLILL). At 159–162 (DKIG) the chain is on the cytoplasmic side. A helical membrane pass occupies residues 163–183 (WRYSLITLSIFMLINLVPILI). The Periplasmic portion of the chain corresponds to 184 to 214 (YREKSQHQLENSTFFRSYFQPFISFLSRPKA). The helical transmembrane segment at 215 to 235 (LPWLFVVLLYMMGDSVTSLMI) threads the bilayer. Residues 236-251 (RPLLVDRGLSLPDIGW) are Cytoplasmic-facing. The chain crosses the membrane as a helical span at residues 252–272 (ILGIVSYSARIVSALIAGLVI). Residues 273–281 (VKLGRIKSL) lie on the Periplasmic side of the membrane. The helical transmembrane segment at 282–302 (IIFGFIADLTTLLYIIPAIGV) threads the bilayer. Topologically, residues 303-304 (SS) are cytoplasmic. Residues 305–325 (LLVLYTVCIIVNATQSMAYTA) form a helical membrane-spanning segment. The Periplasmic portion of the chain corresponds to 326-346 (LLSAMMDKCEKNTAATDYTMQ). The next 2 membrane-spanning stretches (helical) occupy residues 347–367 (VSVM…LATT) and 368–388 (MGYS…VFLI). Residues 389–396 (TQEYGVSS) lie on the Periplasmic side of the membrane.

The protein belongs to the major facilitator superfamily.

Its subcellular location is the cell inner membrane. Its function is as follows. Involved in the TolC-like protein HgdD-dependent secretion of schizokinen, a dihydroxamate-type siderophore. Transports schizokinen from the cytoplasm to the periplasm. The polypeptide is Schizokinen exporter SchE (Nostoc sp. (strain PCC 7120 / SAG 25.82 / UTEX 2576)).